The primary structure comprises 148 residues: uncharacterized protein (148 aa).

2 consecutive transmembrane segments (helical) span residues 16–36 and 41–61; these read IVGA…SIIL and LSFS…AYIF.

It to M.jannaschii MJ0696.

Its subcellular location is the cell membrane. This is an uncharacterized protein from Methanocaldococcus jannaschii (strain ATCC 43067 / DSM 2661 / JAL-1 / JCM 10045 / NBRC 100440) (Methanococcus jannaschii).